The sequence spans 135 residues: Small ribosomal subunit protein bS16m/bS16c (135 aa).

The N-terminal 7 residues, 1 to 7, are a transit peptide targeting the chloroplast and mitochondrion; sequence MVVRIRL. Residues 87–135 are disordered; sequence PMVAMGRKGGARDTRPVDPMTGRYVDAENKTVNANDNQPKEEDTEAKSA. The span at 124-135 shows a compositional bias: basic and acidic residues; that stretch reads QPKEEDTEAKSA.

The protein belongs to the bacterial ribosomal protein bS16 family. In terms of assembly, component of the mitochondrial ribosome small subunit. Expressed at low levels in flowers, and, to a lower extent, in leaves, stems and roots.

The protein resides in the mitochondrion. It localises to the plastid. It is found in the chloroplast. The polypeptide is Small ribosomal subunit protein bS16m/bS16c (Arabidopsis thaliana (Mouse-ear cress)).